Consider the following 101-residue polypeptide: Large ribosomal subunit protein bL28 (101 aa).

The protein belongs to the bacterial ribosomal protein bL28 family.

This Rhodopseudomonas palustris (strain ATCC BAA-98 / CGA009) protein is Large ribosomal subunit protein bL28.